The primary structure comprises 202 residues: Shikimate kinase (202 aa).

20–25 serves as a coordination point for ATP; it reads GSGKST. S24 provides a ligand contact to Mg(2+). Substrate contacts are provided by D42, R66, and G88. R126 is an ATP binding site. R153 contacts substrate.

Belongs to the shikimate kinase family. Monomer. Mg(2+) serves as cofactor.

The protein resides in the cytoplasm. The catalysed reaction is shikimate + ATP = 3-phosphoshikimate + ADP + H(+). It participates in metabolic intermediate biosynthesis; chorismate biosynthesis; chorismate from D-erythrose 4-phosphate and phosphoenolpyruvate: step 5/7. Its function is as follows. Catalyzes the specific phosphorylation of the 3-hydroxyl group of shikimic acid using ATP as a cosubstrate. The sequence is that of Shikimate kinase from Chlorobium luteolum (strain DSM 273 / BCRC 81028 / 2530) (Pelodictyon luteolum).